The chain runs to 729 residues: MSDMQISGYQSAINARHYIQFAGGGRGPGNPGGGRGPGNPGGGRGPGSPGGGRGPGSPGGGRGPGSPGGGRGPGNPGGGRGPGGGRGGGRGGDGRRRDESFVENEGGRGNRSGRTTSTATTARTPGGLARPTTTVRAPVRPKGPIALPVTMTVREFSEATGVGASEILKALLKAGVVANINQQIDYETAAVIAADFGIETVEYVPPQLEGVVENIRDVLAAQDPKDMKPRPPVVTIMGHVDHGKTKLLDAIRSTRVAESEAGGITQHIGAYQVELHGRKITFLDTPGHEAFTAMRARGAQVTDIVVLVVAADDGVMPQTLEAISHVKAAGVPMIVAINKIDAPNANPDRVRQQLANAGVIVEQFGGDVPSVEVSAKLKKNIDGLLEIILLVADLNEYKANPNAPAVGTIIEAEMDRTRGPVATVLVQNGTLRLEDNVLVGSTTGTIRTMFNDAGKRLRFAEPATPVVILGLHDVPQAGDILQVMPDLAVAREIALQRQRKQRLEAMATSRGVSLDGLFSSIQQGKIKELNIILKADVQGSIGAIEHALSQLNTDEVQIRIIHRGTGTITESDVNLAIASHAIIIGFNARPDPAARRQAEQYGVDIRFYNIIYQLTEDIKKAMIGMLEPEYREVTEGFAEVRNTFRLPTREIVAGLYVTEGKISRQYNVRVLRNGVVLHDGKIASLKRFKDDVREVQAGYECGLIVEGFNDITPGDTMEFYRRERVERTV.

A disordered region spans residues 20-141 (QFAGGGRGPG…TTTVRAPVRP (122 aa)). Over residues 22–91 (AGGGRGPGNP…PGGGRGGGRG (70 aa)) the composition is skewed to gly residues. Residues 92-108 (GDGRRRDESFVENEGGR) show a composition bias toward basic and acidic residues. A compositionally biased stretch (low complexity) spans 112–127 (SGRTTSTATTARTPGG). In terms of domain architecture, tr-type G spans 229-396 (PRPPVVTIMG…IILLVADLNE (168 aa)). The interval 238 to 245 (GHVDHGKT) is G1. Residue 238–245 (GHVDHGKT) coordinates GTP. Residues 263-267 (GITQH) are G2. The tract at residues 284–287 (DTPG) is G3. GTP is bound by residues 284–288 (DTPGH) and 338–341 (NKID). The tract at residues 338–341 (NKID) is G4. The segment at 374 to 376 (SAK) is G5.

This sequence belongs to the TRAFAC class translation factor GTPase superfamily. Classic translation factor GTPase family. IF-2 subfamily.

Its subcellular location is the cytoplasm. Its function is as follows. One of the essential components for the initiation of protein synthesis. Protects formylmethionyl-tRNA from spontaneous hydrolysis and promotes its binding to the 30S ribosomal subunits. Also involved in the hydrolysis of GTP during the formation of the 70S ribosomal complex. This chain is Translation initiation factor IF-2, found in Roseiflexus sp. (strain RS-1).